The chain runs to 91 residues: Putative membrane protein insertion efficiency factor (91 aa).

Belongs to the UPF0161 family.

Its subcellular location is the cell inner membrane. Functionally, could be involved in insertion of integral membrane proteins into the membrane. The protein is Putative membrane protein insertion efficiency factor of Saccharophagus degradans (strain 2-40 / ATCC 43961 / DSM 17024).